A 224-amino-acid chain; its full sequence is GrpE protein homolog 2, mitochondrial (224 aa).

A mitochondrion-targeting transit peptide spans 1-31; sequence MAARSLWAVQRLQRLLASGAMSESRGWLHPF. Residue K141 is modified to N6-acetyllysine.

This sequence belongs to the GrpE family. As to quaternary structure, probable component of the PAM complex at least composed of a mitochondrial HSP70 protein, GRPEL1 or GRPEL2, TIMM44, TIMM16/PAM16 and TIMM14/DNAJC19. In terms of tissue distribution, ubiquitous.

It is found in the mitochondrion matrix. Functionally, essential component of the PAM complex, a complex required for the translocation of transit peptide-containing proteins from the inner membrane into the mitochondrial matrix in an ATP-dependent manner. Seems to control the nucleotide-dependent binding of mitochondrial HSP70 to substrate proteins. Stimulates ATPase activity of mt-HSP70. May also serve to modulate the interconversion of oligomeric (inactive) and monomeric (active) forms of mt-HSP70. The protein is GrpE protein homolog 2, mitochondrial (Grpel2) of Mus musculus (Mouse).